Consider the following 177-residue polypeptide: Glutamyl-tRNA(Gln) amidotransferase subunit F, mitochondrial (177 aa).

The N-terminal 16 residues, 1-16 (MIRINSRGLTVSTRRF), are a transit peptide targeting the mitochondrion. The disordered stretch occupies residues 148–177 (PAKGETQGSFNVANMNPRNRPFATIRSKQG). Over residues 153–164 (TQGSFNVANMNP) the composition is skewed to polar residues.

It belongs to the GatF family. In terms of assembly, subunit of the heterotrimeric GatFAB amidotransferase (AdT) complex, composed of A, B and F subunits.

Its subcellular location is the mitochondrion inner membrane. The catalysed reaction is L-glutamyl-tRNA(Gln) + L-glutamine + ATP + H2O = L-glutaminyl-tRNA(Gln) + L-glutamate + ADP + phosphate + H(+). In terms of biological role, allows the formation of correctly charged Gln-tRNA(Gln) through the transamidation of misacylated Glu-tRNA(Gln) in the mitochondria. The reaction takes place in the presence of glutamine and ATP through an activated gamma-phospho-Glu-tRNA(Gln). Required for proper protein synthesis within the mitochondrion. In Scheffersomyces stipitis (strain ATCC 58785 / CBS 6054 / NBRC 10063 / NRRL Y-11545) (Yeast), this protein is Glutamyl-tRNA(Gln) amidotransferase subunit F, mitochondrial.